Here is a 232-residue protein sequence, read N- to C-terminus: Ribosomal RNA small subunit methyltransferase G (232 aa).

S-adenosyl-L-methionine contacts are provided by residues Gly-93, Leu-98, Val-144–Glu-145, and Arg-163.

Belongs to the methyltransferase superfamily. RNA methyltransferase RsmG family.

The protein resides in the cytoplasm. The catalysed reaction is guanosine(527) in 16S rRNA + S-adenosyl-L-methionine = N(7)-methylguanosine(527) in 16S rRNA + S-adenosyl-L-homocysteine. Specifically methylates the N7 position of guanine in position 527 of 16S rRNA. The polypeptide is Ribosomal RNA small subunit methyltransferase G (Burkholderia pseudomallei (strain 668)).